Reading from the N-terminus, the 84-residue chain is Minor capsid protein P30 (84 aa).

In terms of assembly, dimer.

It is found in the virion. Its function is as follows. Minor capsid protein essential for stable capsid assembly of complete particles. In Enterobacteria phage PRD1 (Bacteriophage PRD1), this protein is Minor capsid protein P30 (XXX).